A 764-amino-acid polypeptide reads, in one-letter code: 5-methyltetrahydropteroyltriglutamate--homocysteine methyltransferase (764 aa).

Residues 16–19 (RELK) and Lys121 contribute to the 5-methyltetrahydropteroyltri-L-glutamate site. Residues 440–442 (IGS) and Glu493 each bind L-homocysteine. L-methionine-binding positions include 440 to 442 (IGS) and Glu493. Residues 524-525 (RC) and Trp570 each bind 5-methyltetrahydropteroyltri-L-glutamate. Asp608 provides a ligand contact to L-homocysteine. Asp608 is a binding site for L-methionine. Glu614 serves as a coordination point for 5-methyltetrahydropteroyltri-L-glutamate. Residues His650, Cys652, and Glu674 each coordinate Zn(2+). His703 functions as the Proton donor in the catalytic mechanism. Position 735 (Cys735) interacts with Zn(2+).

It belongs to the vitamin-B12 independent methionine synthase family. Zn(2+) is required as a cofactor.

The catalysed reaction is 5-methyltetrahydropteroyltri-L-glutamate + L-homocysteine = tetrahydropteroyltri-L-glutamate + L-methionine. The protein operates within amino-acid biosynthesis; L-methionine biosynthesis via de novo pathway; L-methionine from L-homocysteine (MetE route): step 1/1. In terms of biological role, catalyzes the transfer of a methyl group from 5-methyltetrahydrofolate to homocysteine resulting in methionine formation. This Burkholderia lata (strain ATCC 17760 / DSM 23089 / LMG 22485 / NCIMB 9086 / R18194 / 383) protein is 5-methyltetrahydropteroyltriglutamate--homocysteine methyltransferase.